Consider the following 531-residue polypeptide: Probable peptide ABC transporter periplasmic-binding protein y4tO (531 aa).

A signal peptide (tat-type signal) is located at residues 1 to 32 (MTISRRDLFKAGLAAGAALSVPSLLRAQTAVA).

Belongs to the bacterial solute-binding protein 5 family. Predicted to be exported by the Tat system. The position of the signal peptide cleavage has not been experimentally proven.

The protein resides in the periplasm. Its function is as follows. Probably part of the binding-protein-dependent transport system y4tOPQRS for a peptide. This Sinorhizobium fredii (strain NBRC 101917 / NGR234) protein is Probable peptide ABC transporter periplasmic-binding protein y4tO.